We begin with the raw amino-acid sequence, 588 residues long: Calicin (588 aa).

In terms of domain architecture, BTB spans serine 12 to leucine 124. Residues cysteine 133–phenylalanine 235 enclose the BACK domain. A Phosphoserine modification is found at serine 149. Kelch repeat units follow at residues serine 280–arginine 327, tyrosine 328–glycine 375, valine 377–aspartate 423, histidine 425–glutamine 475, aspartate 476–serine 525, and lysine 526–leucine 580.

As to quaternary structure, interacts with CYLC1; the interaction may be relevant for proper acrosome attachment to the nuclear envelope. Expressed in testis, in spermatozoa (at protein level).

It localises to the cytoplasm. Its subcellular location is the cytoskeleton. The protein localises to the perinuclear theca. It is found in the calyx. In terms of biological role, required for both nuclear and acrosomal shaping during spermiogenesis. The protein is Calicin (CCIN) of Homo sapiens (Human).